The chain runs to 89 residues: Small ribosomal subunit protein uS19 (89 aa).

This sequence belongs to the universal ribosomal protein uS19 family.

In terms of biological role, protein S19 forms a complex with S13 that binds strongly to the 16S ribosomal RNA. The protein is Small ribosomal subunit protein uS19 of Rhodopirellula baltica (strain DSM 10527 / NCIMB 13988 / SH1).